The sequence spans 546 residues: CTP synthase (546 aa).

The tract at residues 1–265 (MTKYVFVTGG…DEIVCHKLNI (265 aa)) is amidoligase domain. Residue Ser-13 coordinates CTP. Residue Ser-13 participates in UTP binding. Residues 14-19 (SLGKGI) and Asp-71 contribute to the ATP site. 2 residues coordinate Mg(2+): Asp-71 and Glu-139. CTP is bound by residues 146–148 (DIE), 186–191 (KTKPTQ), and Lys-222. UTP-binding positions include 186–191 (KTKPTQ) and Lys-222. The 254-residue stretch at 290-543 (KIAFVGKYVD…VKAALANQKA (254 aa)) folds into the Glutamine amidotransferase type-1 domain. Gly-351 contacts L-glutamine. The Nucleophile; for glutamine hydrolysis role is filled by Cys-378. L-glutamine-binding positions include 379 to 382 (LGMQ), Glu-402, and Arg-469. Catalysis depends on residues His-516 and Glu-518.

It belongs to the CTP synthase family. Homotetramer.

It catalyses the reaction UTP + L-glutamine + ATP + H2O = CTP + L-glutamate + ADP + phosphate + 2 H(+). The enzyme catalyses L-glutamine + H2O = L-glutamate + NH4(+). The catalysed reaction is UTP + NH4(+) + ATP = CTP + ADP + phosphate + 2 H(+). It participates in pyrimidine metabolism; CTP biosynthesis via de novo pathway; CTP from UDP: step 2/2. Its activity is regulated as follows. Allosterically activated by GTP, when glutamine is the substrate; GTP has no effect on the reaction when ammonia is the substrate. The allosteric effector GTP functions by stabilizing the protein conformation that binds the tetrahedral intermediate(s) formed during glutamine hydrolysis. Inhibited by the product CTP, via allosteric rather than competitive inhibition. In terms of biological role, catalyzes the ATP-dependent amination of UTP to CTP with either L-glutamine or ammonia as the source of nitrogen. Regulates intracellular CTP levels through interactions with the four ribonucleotide triphosphates. The sequence is that of CTP synthase from Dechloromonas aromatica (strain RCB).